The sequence spans 62 residues: uncharacterized protein (62 aa).

Positions 1-62 (MTSTQNLKDK…PPKKSLSQLP (62 aa)) are disordered. The span at 7–29 (LKDKFEEEIRQQKEGKGKKEKVW) shows a compositional bias: basic and acidic residues. Positions 32-43 (HSDSSYNKQTAV) are enriched in polar residues.

This is an uncharacterized protein from Dictyostelium discoideum (Social amoeba).